Consider the following 166-residue polypeptide: Prorelaxin H1 (166 aa).

Positions 1–5 (SRAVA) are cleaved as a signal peptide. 3 disulfides stabilise this stretch: C16–C153, C28–C166, and C152–C157. The propeptide at 37 to 139 (SLSQEDAPQT…KYLGLDTHSQ (103 aa)) is connecting peptide.

It belongs to the insulin family. As to quaternary structure, heterodimer of a B chain and an A chain linked by two disulfide bonds. As to expression, expressed in the corpus luteum of pregnancy but not in the placenta.

The protein resides in the secreted. In terms of biological role, relaxin is an ovarian hormone that acts with estrogen to produce dilatation of the birth canal in many mammals. May be involved in remodeling of connective tissues during pregnancy, promoting growth of pubic ligaments and ripening of the cervix. The chain is Prorelaxin H1 (RNL1) from Pan troglodytes (Chimpanzee).